We begin with the raw amino-acid sequence, 248 residues long: Pulmonary surfactant-associated protein A1 (248 aa).

An N-terminal signal peptide occupies residues 1–20 (MWLCPLALNLILMAASGAVC). The Collagen-like domain maps to 28 to 100 (GSPGIPGTPG…PGERGPPGLP (73 aa)). Residues Pro-30, Pro-33, Pro-36, Pro-42, Pro-54, Pro-57, Pro-63, Pro-67, and Pro-70 each carry the 4-hydroxyproline modification. The interval 31-101 (GIPGTPGSHG…GERGPPGLPA (71 aa)) is disordered. Positions 42 to 51 (PGRDGRDGLK) are enriched in basic and acidic residues. Positions 54–70 (PGPPGPMGPPGEMPCPP) are enriched in pro residues. The region spanning 132–248 (MTVGEKVFSS…LYSRLTICEF (117 aa)) is the C-type lectin domain. Disulfide bonds link Cys-155–Cys-246 and Cys-224–Cys-238. Asn-207 is a glycosylation site (N-linked (GlcNAc...) asparagine).

This sequence belongs to the SFTPA family. Oligomeric complex of 6 set of homotrimers. Interacts with CD93. As to quaternary structure, (Microbial infection) Binds M.bovis cell surface protein Apa via its glycosylated sites; probably also recognizes other bacterial moieties. In terms of assembly, (Microbial infection) Binds to the S.aureus extracellular adherence protein, Eap, thereby enhancing phagocytosis and killing of S.aureus by alveolar macrophages. (Microbial infection) Interacts with M.pneumoniae CARDS toxin; CARDS probably uses this protein as a receptor. In terms of processing, N-acetylated.

The protein resides in the secreted. The protein localises to the extracellular space. It localises to the extracellular matrix. It is found in the surface film. In terms of biological role, in presence of calcium ions, it binds to surfactant phospholipids and contributes to lower the surface tension at the air-liquid interface in the alveoli of the mammalian lung and is essential for normal respiration. Enhances the expression of MYO18A/SP-R210 on alveolar macrophages. Functionally, (Microbial infection) Recognition of M.tuberculosis by dendritic cells may occur partially via this molecule. Can recognize, bind, and opsonize pathogens to enhance their elimination by alveolar macrophages. Its function is as follows. (Microbial infection) Binds M.pneumoniae CARDS toxin, serves as one receptor for this pathogen. When SFTPA1 is down-regulated by siRNA, less toxin binds to human cells and less vacuolization (a symptom of M.pneumoniae infection) is seen. This Homo sapiens (Human) protein is Pulmonary surfactant-associated protein A1 (SFTPA1).